The sequence spans 244 residues: Triosephosphate isomerase (244 aa).

N9 to K11 is a binding site for substrate. The Electrophile role is filled by H93. Catalysis depends on E160, which acts as the Proton acceptor. Residues G166 and S206 each coordinate substrate.

The protein belongs to the triosephosphate isomerase family. As to quaternary structure, homodimer.

It is found in the cytoplasm. The enzyme catalyses D-glyceraldehyde 3-phosphate = dihydroxyacetone phosphate. The protein operates within carbohydrate biosynthesis; gluconeogenesis. Its pathway is carbohydrate degradation; glycolysis; D-glyceraldehyde 3-phosphate from glycerone phosphate: step 1/1. Its function is as follows. Involved in the gluconeogenesis. Catalyzes stereospecifically the conversion of dihydroxyacetone phosphate (DHAP) to D-glyceraldehyde-3-phosphate (G3P). This chain is Triosephosphate isomerase, found in Mycoplasma pneumoniae (strain ATCC 29342 / M129 / Subtype 1) (Mycoplasmoides pneumoniae).